Here is a 462-residue protein sequence, read N- to C-terminus: Notoamide biosynthesis cluster protein O' (462 aa).

3 helical membrane passes run 16–36 (IFNV…WAAM), 55–75 (AVIF…IAKI), and 79–99 (WAFA…YCNV). Asn-102 carries N-linked (GlcNAc...) asparagine glycosylation. Transmembrane regions (helical) follow at residues 104 to 124 (SWYI…FWLT), 143 to 163 (AYWL…TLGV), 173 to 193 (ISVQ…FVAA), and 233 to 253 (ILLL…FSTY). Residue Asn-254 is glycosylated (N-linked (GlcNAc...) asparagine). 4 consecutive transmembrane segments (helical) span residues 265-285 (LSSL…GFFL), 297-317 (MAAF…AMVV), 343-363 (VYIL…WLIG), and 404-424 (AVAV…FVIY). Residues 443-462 (LQTSGEGSHDIMDANGKSDD) form a disordered region. Residues 449–462 (GSHDIMDANGKSDD) show a composition bias toward basic and acidic residues.

The protein belongs to the unc-93 family.

Its subcellular location is the membrane. Its function is as follows. Part of the gene cluster that mediates the biosynthesis of notoamide, a fungal indole alkaloid that belongs to a family of natural products containing a characteristic bicyclo[2.2.2]diazaoctane core. The first step of notoamide biosynthesis involves coupling of L-proline and L-tryptophan by the bimodular NRPS notE', to produce cyclo-L-tryptophan-L-proline called brevianamide F. The reverse prenyltransferase notF' then acts as a deoxybrevianamide E synthase and converts brevianamide F to deoxybrevianamide E via reverse prenylation at C-2 of the indole ring leading to the bicyclo[2.2.2]diazaoctane core. Deoxybrevianamide E is further hydroxylated at C-6 of the indole ring, likely catalyzed by the cytochrome P450 monooxygenase notG', to yield 6-hydroxy-deoxybrevianamide E. 6-hydroxy-deoxybrevianamide E is a specific substrate of the prenyltransferase notC' for normal prenylation at C-7 to produce 6-hydroxy-7-prenyl-deoxybrevianamide, also called notoamide S. As the proposed pivotal branching point in notoamide biosynthesis, notoamide S can be diverted to notoamide E through an oxidative pyran ring closure putatively catalyzed by either notH' cytochrome P450 monooxygenase or the notD' FAD-linked oxidoreductase. This step would be followed by an indole 2,3-epoxidation-initiated pinacol-like rearrangement catalyzed by the notB' FAD-dependent monooxygenase leading to the formation of notoamide C and notoamide D. On the other hand notoamide S is converted to notoamide T by notH' (or notD'), a bifunctional oxidase that also functions as the intramolecular Diels-Alderase responsible for generation of (-)-notoamide T. To generate antipodal (+)-notoaminide T, notH (or notD) in Aspergillus strain MF297-2 is expected to catalyze a Diels-Alder reaction leading to the opposite stereochemistry. The remaining oxidoreductase notD' (or notH') likely catalyzes the oxidative pyran ring formation to yield (-)-stephacidin A. The FAD-dependent monooxygenase notI' is highly similar to notB' and is predicted to catalyze a similar conversion from (-)-stephacidin A to (+)-notoamide B via the 2,3-epoxidation of (-)-stephacidin A followed by a pinacol-type rearrangement. Finally, it remains unclear which enzyme could be responsible for the final hydroxylation steps leading to notoamide A and sclerotiamide. The function of notO' in the notoamide biosynthesis has not been determined yet. In Aspergillus versicolor, this protein is Notoamide biosynthesis cluster protein O'.